A 447-amino-acid chain; its full sequence is Tol-Pal system protein TolB (447 aa).

The N-terminal stretch at Met1–Ala34 is a signal peptide. A disordered region spans residues Arg426 to Ser447.

This sequence belongs to the TolB family. In terms of assembly, the Tol-Pal system is composed of five core proteins: the inner membrane proteins TolA, TolQ and TolR, the periplasmic protein TolB and the outer membrane protein Pal. They form a network linking the inner and outer membranes and the peptidoglycan layer.

Its subcellular location is the periplasm. Its function is as follows. Part of the Tol-Pal system, which plays a role in outer membrane invagination during cell division and is important for maintaining outer membrane integrity. The polypeptide is Tol-Pal system protein TolB (Rhodopseudomonas palustris (strain BisB18)).